Consider the following 517-residue polypeptide: Variant surface glycoprotein MVAT5 (517 aa).

Positions 1-21 (MIGKAFIILSLLNELPTPTAA) are cleaved as a signal peptide. Disulfide bonds link cysteine 417–cysteine 430 and cysteine 426–cysteine 443. A glycan (N-linked (GlcNAc...) asparagine) is linked at asparagine 435. Positions 454 to 470 (QAAQTAGAGEGAAGTTT) are enriched in low complexity. The segment at 454-487 (QAAQTAGAGEGAAGTTTDKCKDKKKDDCKSPDCK) is disordered. Residues 471–487 (DKCKDKKKDDCKSPDCK) show a composition bias toward basic and acidic residues. Aspartate 495 carries the GPI-anchor amidated aspartate lipid modification. A propeptide spans 496–517 (SSILLNKQFALMVSAAFVALLF) (removed in mature form).

The protein localises to the cell membrane. In terms of biological role, VSG forms a coat on the surface of the parasite. The trypanosome evades the immune response of the host by expressing a series of antigenically distinct VSGs from an estimated 1000 VSG genes. The sequence is that of Variant surface glycoprotein MVAT5 from Trypanosoma brucei rhodesiense.